We begin with the raw amino-acid sequence, 307 residues long: MDHFLKLLPKLTPQLRKGDCGKIAVIGGSLEYTGAPYYAASSVSRLGADLIHVFCAPDAAPVIKGYSPDLIVHPGMNASSILPKLNRMDAIVVGPGLGRNPTLWPLLQEIFNFVKNEKVPFVIDGDGLWFVSEHIEHFPRQMVTTVLTPNIVEFSRLCKSALGEEDVLNVKSSSQLQHLAAELSRKMDVTIYMKGEVDLVVTPNGEVSKCSTDSSLRRCGGQGDVTAGSLGLFLYWAKKNLGDDWTSAHHEAGISSSWLVRTAGRRAFEKHGRSMNTPLLLDEIPKLVRDVETREMKDTVHSDSSKH.

The region spanning methionine 1–valine 291 is the YjeF C-terminal domain. Residues glycine 96 and asparagine 150–arginine 156 each bind (6S)-NADPHX. Residues lysine 194–aspartate 198 and serine 214–glycine 223 contribute to the ATP site. Aspartate 224 contributes to the (6S)-NADPHX binding site.

This sequence belongs to the NnrD/CARKD family. It depends on Mg(2+) as a cofactor.

The enzyme catalyses (6S)-NADHX + ATP = ADP + phosphate + NADH + H(+). The catalysed reaction is (6S)-NADPHX + ATP = ADP + phosphate + NADPH + H(+). In terms of biological role, catalyzes the dehydration of the S-form of NAD(P)HX at the expense of ATP, which is converted to ADP. Together with NAD(P)HX epimerase, which catalyzes the epimerization of the S- and R-forms, the enzyme allows the repair of both epimers of NAD(P)HX, a damaged form of NAD(P)H that is a result of enzymatic or heat-dependent hydration. The sequence is that of ATP-dependent (S)-NAD(P)H-hydrate dehydratase from Caenorhabditis briggsae.